The chain runs to 106 residues: Pyrimidine/purine nucleoside phosphorylase (106 aa).

Belongs to the nucleoside phosphorylase PpnP family.

It carries out the reaction a purine D-ribonucleoside + phosphate = a purine nucleobase + alpha-D-ribose 1-phosphate. It catalyses the reaction adenosine + phosphate = alpha-D-ribose 1-phosphate + adenine. The enzyme catalyses cytidine + phosphate = cytosine + alpha-D-ribose 1-phosphate. The catalysed reaction is guanosine + phosphate = alpha-D-ribose 1-phosphate + guanine. It carries out the reaction inosine + phosphate = alpha-D-ribose 1-phosphate + hypoxanthine. It catalyses the reaction thymidine + phosphate = 2-deoxy-alpha-D-ribose 1-phosphate + thymine. The enzyme catalyses uridine + phosphate = alpha-D-ribose 1-phosphate + uracil. The catalysed reaction is xanthosine + phosphate = alpha-D-ribose 1-phosphate + xanthine. Functionally, catalyzes the phosphorolysis of diverse nucleosides, yielding D-ribose 1-phosphate and the respective free bases. Can use uridine, adenosine, guanosine, cytidine, thymidine, inosine and xanthosine as substrates. Also catalyzes the reverse reactions. The sequence is that of Pyrimidine/purine nucleoside phosphorylase from Burkholderia cenocepacia (strain ATCC BAA-245 / DSM 16553 / LMG 16656 / NCTC 13227 / J2315 / CF5610) (Burkholderia cepacia (strain J2315)).